Here is a 350-residue protein sequence, read N- to C-terminus: MAPSWLFLLFIPGMVGSSRSCFPGCQCIVDNFGLFHSFSLTKVDCSGVGPHVVPVSIPLDTSYLDLSANGIKRINESVLSGPGYTTLINLNLSHNQIVRISFSTFSKLRYLESLDLSHNLLETLPDGSFLYSRLTELDLSSNKLLEVGIGAFTLKSQGRSMTINLGNNNIRSIHRGAERPVPNIHSLTLSGNDLLSVPDLHGIPLRHLDLDRNPLAKIEKESFLGLEGLTHLSLSDLPNLREVSPYSFKTLPSLLDLDLSSNPQLKSLSSDMFFGLDSLQELNLAYSGVAALPKDIMLNLPSMKSITWGENIRCSKTVKESPFHAQKGRVREEVLLCHDDYGAVPAQDVL.

An N-terminal signal peptide occupies residues 1-17 (MAPSWLFLLFIPGMVGS). Residues 18–59 (SRSCFPGCQCIVDNFGLFHSFSLTKVDCSGVGPHVVPVSIPL) form the LRRNT domain. 10 LRR repeats span residues 60 to 81 (DTSY…VLSG), 86 to 107 (TLIN…TFSK), 110 to 131 (YLES…SFLY), 133 to 154 (RLTE…AFTL), 159 to 180 (RSMT…AERP), 183 to 203 (NIHS…LHGI), 204 to 225 (PLRH…SFLG), 228 to 250 (GLTH…SFKT), 253 to 275 (SLLD…MFFG), and 278 to 299 (SLQE…IMLN). N-linked (GlcNAc...) asparagine glycans are attached at residues asparagine 75 and asparagine 91.

In terms of assembly, interacts with bmp4. Interacts with dll1 (via extracellular region). Interacts with fgf8; inhibits fgf8 signaling. Interacts with nodal2/Xnr2; enhances nodal2 activity.

Its subcellular location is the secreted. Its function is as follows. Contributes to various developmental events through its interactions with multiple signaling pathways. Dorsalizing factor which functions as an inhibitor of bone morphogenetic proteins (BMP) during gastrulation. Promotes dll1-dependent activation of Notch signaling and is required for neural crest formation. Induces endoderm and dorsal mesoderm formation by enhancing nodal2/Xnr2 activity while inhibiting ventrolateral mesoderm formation through inhibition of fgf8. The sequence is that of Tsukushi (tsku) from Xenopus tropicalis (Western clawed frog).